A 237-amino-acid polypeptide reads, in one-letter code: Phosphoribosylaminoimidazole-succinocarboxamide synthase (237 aa).

This sequence belongs to the SAICAR synthetase family.

The enzyme catalyses 5-amino-1-(5-phospho-D-ribosyl)imidazole-4-carboxylate + L-aspartate + ATP = (2S)-2-[5-amino-1-(5-phospho-beta-D-ribosyl)imidazole-4-carboxamido]succinate + ADP + phosphate + 2 H(+). It participates in purine metabolism; IMP biosynthesis via de novo pathway; 5-amino-1-(5-phospho-D-ribosyl)imidazole-4-carboxamide from 5-amino-1-(5-phospho-D-ribosyl)imidazole-4-carboxylate: step 1/2. The chain is Phosphoribosylaminoimidazole-succinocarboxamide synthase from Enterobacter sp. (strain 638).